We begin with the raw amino-acid sequence, 350 residues long: Thioredoxin-like fold domain-containing protein MRL7L, chloroplastic (350 aa).

A chloroplast-targeting transit peptide spans 1–48 (MILPFSTQFTCPVQDNGFSPSSLLSHCKRDRFEVTSLRYDSFGSVKTA). Disordered stretches follow at residues 78 to 107 (KKEE…LDDP) and 182 to 201 (NEKK…DSEK). Acidic residues-rich tracts occupy residues 82-93 (DSDSEDEEDEVK) and 186-200 (EEED…DDSE).

The protein resides in the plastid. It is found in the chloroplast stroma. It localises to the nucleus. Plays an essential role in early steps of chloroplast development. Involved in the regulation of plastid gene expression. Required for the proper function of the plastid transcriptional machinery and protein accumulation in thylakoid membranes. May function as molecular chaperone to ensure proper organization of the nucleoids in chloroplasts. Is a necessary component of phytochrome signaling for photosynthesis-associated plastid-encoded genes (PhAPGs) activation. Mediates the degradation of two repressors of chloroplast biogenesis, PIF1 and PIF3 in nucleus. Promotes the assembly of the plastid-encoded RNA polymerase (PEP) complex for PhAPG transcription in plastids. In Arabidopsis thaliana (Mouse-ear cress), this protein is Thioredoxin-like fold domain-containing protein MRL7L, chloroplastic.